We begin with the raw amino-acid sequence, 284 residues long: Tropomyosin (284 aa).

Residues 1–39 are disordered; the sequence is MDAIKKKMQAMKLEKDNAMDRADTLEQQNKEANIRAEKT. Residues 1 to 284 adopt a coiled-coil conformation; the sequence is MDAIKKKMQA…DQTFSELSGY (284 aa). Residues 12–39 show a composition bias toward basic and acidic residues; it reads KLEKDNAMDRADTLEQQNKEANIRAEKT.

It belongs to the tropomyosin family. In terms of assembly, homodimer.

In terms of biological role, tropomyosin, in association with the troponin complex, plays a central role in the calcium dependent regulation of muscle contraction. This Homarus americanus (American lobster) protein is Tropomyosin (TM1).